Here is a 187-residue protein sequence, read N- to C-terminus: GTP cyclohydrolase 1 (187 aa).

Residues cysteine 81, histidine 84, and cysteine 152 each contribute to the Zn(2+) site.

This sequence belongs to the GTP cyclohydrolase I family. As to quaternary structure, homomer.

The enzyme catalyses GTP + H2O = 7,8-dihydroneopterin 3'-triphosphate + formate + H(+). It participates in cofactor biosynthesis; 7,8-dihydroneopterin triphosphate biosynthesis; 7,8-dihydroneopterin triphosphate from GTP: step 1/1. The chain is GTP cyclohydrolase 1 from Pyrobaculum neutrophilum (strain DSM 2338 / JCM 9278 / NBRC 100436 / V24Sta) (Thermoproteus neutrophilus).